The primary structure comprises 352 residues: Small ribosomal subunit biogenesis GTPase RsgA 1 (352 aa).

The disordered stretch occupies residues 1–24 (MAKKKKLTQGQVRRVRDNQQKRLK). The CP-type G domain maps to 104-272 (TSVLTRPDYY…LIDSPGVREF (169 aa)). GTP-binding positions include 160-163 (NKID) and 214-222 (GQSGVGKSS). Positions 296, 301, 303, and 309 each coordinate Zn(2+).

Belongs to the TRAFAC class YlqF/YawG GTPase family. RsgA subfamily. Monomer. Associates with 30S ribosomal subunit, binds 16S rRNA. It depends on Zn(2+) as a cofactor.

The protein localises to the cytoplasm. In terms of biological role, one of several proteins that assist in the late maturation steps of the functional core of the 30S ribosomal subunit. Helps release RbfA from mature subunits. May play a role in the assembly of ribosomal proteins into the subunit. Circularly permuted GTPase that catalyzes slow GTP hydrolysis, GTPase activity is stimulated by the 30S ribosomal subunit. This Vibrio vulnificus (strain CMCP6) protein is Small ribosomal subunit biogenesis GTPase RsgA 1.